The sequence spans 215 residues: MSKVYDWFEERLEIQAIADDITSKYVPPHVNIFYCLGGITLTCFLVQVATGFAMTFYYRPTVTEAFASVQYIMTEANFGWLIRSVHRWSASMMVLMMILHVFRVYLTGGFKKPRELTWVTGVVLAVLTASFGVTGYSLPRDQIGYWAVKIVTGVPDAIPVIGSPLVELLRGSASVGQSTLTRFYSLHTFVLPLVSAVFMLIHFLMIRKQGISGPL.

Residues 32–52 (IFYCLGGITLTCFLVQVATGF) traverse the membrane as a helical segment. A heme c-binding site is contributed by Cys35. His86 and His100 together coordinate heme b. 3 helical membrane-spanning segments follow: residues 90–110 (ASMM…TGGF), 116–136 (LTWV…VTGY), and 186–206 (LHTF…FLMI). Heme b-binding residues include His187 and His202.

Belongs to the cytochrome b family. PetB subfamily. In terms of assembly, the 4 large subunits of the cytochrome b6-f complex are cytochrome b6, subunit IV (17 kDa polypeptide, PetD), cytochrome f and the Rieske protein, while the 4 small subunits are PetG, PetL, PetM and PetN. The complex functions as a dimer. Heme b is required as a cofactor. Requires heme c as cofactor.

It localises to the plastid. Its subcellular location is the chloroplast thylakoid membrane. Its function is as follows. Component of the cytochrome b6-f complex, which mediates electron transfer between photosystem II (PSII) and photosystem I (PSI), cyclic electron flow around PSI, and state transitions. The protein is Cytochrome b6 of Pelargonium hortorum (Common geranium).